The following is a 405-amino-acid chain: Sialic acid transporter NanX (405 aa).

The Cytoplasmic portion of the chain corresponds to 1–20; that stretch reads MATAWYKQVNPPQRKALFSA. A helical membrane pass occupies residues 21–41; sequence WLGYVFDGFDFMMIFYILHII. The Periplasmic segment spans residues 42–53; the sequence is KADLGITDIQAT. A helical transmembrane segment spans residues 54 to 74; that stretch reads LIGTVAFIARPIGGGFFGAMA. The Cytoplasmic portion of the chain corresponds to 75–80; the sequence is DKYGRK. A helical membrane pass occupies residues 81 to 101; the sequence is PMMMWAIFIYSVGTGLSGIAT. Position 102 (Asn-102) is a topological domain, periplasmic. A helical membrane pass occupies residues 103–123; that stretch reads LYMLAVCRFIVGLGMSGEYAC. The Cytoplasmic portion of the chain corresponds to 124-139; sequence ASTYAVESWPKNLQSK. Residues 140–160 form a helical membrane-spanning segment; the sequence is ASAFLVSGFSVGNIIAAQIIP. Over 161 to 164 the chain is Periplasmic; the sequence is QFAE. A helical membrane pass occupies residues 165-185; sequence VYGWRNSFFIGLLPVLLVLWI. Residues 186–214 are Cytoplasmic-facing; the sequence is RKSAPESQEWIEDKYKDKSTFLSVFRKPH. The helical transmembrane segment at 215–235 threads the bilayer; it reads LSISMIVFLVCFCLFGANWPI. The Periplasmic segment spans residues 236 to 250; that stretch reads NGLLPSYLADNGVNT. Residues 251-271 form a helical membrane-spanning segment; that stretch reads VVISTLMTIAGLGTLTGTIFF. The Cytoplasmic segment spans residues 272 to 282; it reads GFVGDKIGVKK. A helical membrane pass occupies residues 283–303; that stretch reads AFVVGLITSFIFLCPLFFISV. At 304 to 307 the chain is on the periplasmic side; sequence KNSS. A helical membrane pass occupies residues 308–328; sequence LIGLCLFGLMFTNLGIAGLVP. At 329–344 the chain is on the cytoplasmic side; it reads KFIYDYFPTKLRGLGT. Residues 345–365 traverse the membrane as a helical segment; sequence GLIYNLGATGGMAAPVLATYI. Over 366 to 371 the chain is Periplasmic; it reads SGYYGL. A helical membrane pass occupies residues 372 to 392; the sequence is GVSLFIVTVAFSALLILLVGF. Residues 393–405 are Cytoplasmic-facing; the sequence is DIPGKIYKLSVAK.

The protein belongs to the major facilitator superfamily. Sugar transporter (TC 2.A.1.1) family.

It is found in the cell inner membrane. In terms of biological role, probably transports across the inner membrane the two dehydrated forms of N-acetylneuraminate (Neu5Ac), 2,7-anhydro-N-acetylneuraminate (2,7-AN) and 2-deoxy-2,3-didehydro-N-acetylneuraminate (2,3-EN). The sequence is that of Sialic acid transporter NanX from Escherichia coli (strain K12).